Reading from the N-terminus, the 105-residue chain is MVIRVYIASSSGSVAVKKRQQAIVGFLEANRISFEEVDITMLEDQRLWMYQKIPDEKRPEKGNPLPPQIFNGEDYCGDYEDFFQSKETNTVFSFLRLPSVKDSES.

An SH3-binding motif is present at residues 61 to 67 (KGNPLPP).

It belongs to the SH3BGR family.

The protein localises to the nucleus. The chain is SH3 domain-binding glutamic acid-rich-like protein 2 (sh3bgrl2) from Danio rerio (Zebrafish).